Reading from the N-terminus, the 84-residue chain is Cytochrome c oxidase subunit 12, mitochondrial (84 aa).

The CHCH domain occupies 27–70 (TKHCWQNYVDYHKCILAKGEDFAPCRQFWLAYRSLCPSGWYQRW). Positions 30–40 (CWQNYVDYHKC) match the Cx9C motif motif. Intrachain disulfides connect Cys-30–Cys-62 and Cys-40–Cys-51. Positions 51-62 (CRQFWLAYRSLC) match the Cx10C motif motif.

Belongs to the cytochrome c oxidase subunit 6B family. Component of the cytochrome c oxidase (complex IV, CIV), a multisubunit enzyme composed of 11 subunits. The complex is composed of a catalytic core of 3 subunits Cox1, Cox2 and Cox3, encoded in the mitochondrial DNA, and 8 supernumerary subunits Cox4, Cox5a/Cox5, Cox6, Cox7, Cox8, Cox7a/Cox9, Cox6b/Cox12 and Cox6a/Cox13, which are encoded in the nuclear genome. The complex exists as a monomer or a dimer and forms respiratory supercomplexes (SCs) in the inner mitochondrial membrane with NADH-ubiquinone oxidoreductase (complex I, CI) and ubiquinol-cytochrome c oxidoreductase (cytochrome b-c1 complex, complex III, CIII), resulting in various different assemblies (supercomplexes I(1)IV(1), I(1)III(3)IV(2), III(2)IV(1) and III(2)IV(2) as well as larger supercomplexes of compositions like I(1)III(2)IV(5-6)).

Its subcellular location is the mitochondrion inner membrane. The protein operates within energy metabolism; oxidative phosphorylation. Component of the cytochrome c oxidase, the last enzyme in the mitochondrial electron transport chain which drives oxidative phosphorylation. The respiratory chain contains 3 multisubunit complexes succinate dehydrogenase (complex II, CII), ubiquinol-cytochrome c oxidoreductase (cytochrome b-c1 complex, complex III, CIII) and cytochrome c oxidase (complex IV, CIV), that cooperate to transfer electrons derived from NADH and succinate to molecular oxygen, creating an electrochemical gradient over the inner membrane that drives transmembrane transport and the ATP synthase. Cytochrome c oxidase is the component of the respiratory chain that catalyzes the reduction of oxygen to water. Electrons originating from reduced cytochrome c in the intermembrane space (IMS) are transferred via the dinuclear copper A center (CU(A)) of Cox2 and heme A of Cox1 to the active site in Cox1, a binuclear center (BNC) formed by heme A3 and copper B (CU(B)). The BNC reduces molecular oxygen to 2 water molecules using 4 electrons from cytochrome c in the IMS and 4 protons from the mitochondrial matrix. The chain is Cytochrome c oxidase subunit 12, mitochondrial (cox-13) from Neurospora crassa (strain ATCC 24698 / 74-OR23-1A / CBS 708.71 / DSM 1257 / FGSC 987).